The chain runs to 362 residues: MERLTVTLGERSYPITIAAGLFNDPASFWPLRAGDQTMLVTNETLAPLWLDKVRSALEQAGVKVDQVILPDGEQYKSLAVLETVFSALLEKPHGRDTTLIALGGGVIGDLTGFAAACYQRGVRFIQVPTTLLSQVDSSVGGKTAVNHPLGKNMIGAFWQPASVVVDLDCLQTLPARELASGLAEVIKYGIILDRDFFLWLEENIDALLALDGAAMAYCIRRCCEIKADVVAADERESGMRALLNLGHTFGHAIEAEMGYGNWLHGEAVAAGMVMAARAAERLGQFETQDVERIIALLKRAGLPVTGPETMPPQAYLPHMMRDKKVLAGELRLVLPLAIGKSEVRGGVPHDLVLSAIADCQQA.

Residues 71 to 76, 105 to 109, 129 to 130, Lys-142, Lys-151, and 169 to 172 contribute to the NAD(+) site; these read DGEQYK, GVIGD, TT, and CLQT. Glu-184, His-247, and His-264 together coordinate Zn(2+).

This sequence belongs to the sugar phosphate cyclases superfamily. Dehydroquinate synthase family. It depends on Co(2+) as a cofactor. Zn(2+) is required as a cofactor. NAD(+) serves as cofactor.

The protein resides in the cytoplasm. The enzyme catalyses 7-phospho-2-dehydro-3-deoxy-D-arabino-heptonate = 3-dehydroquinate + phosphate. It functions in the pathway metabolic intermediate biosynthesis; chorismate biosynthesis; chorismate from D-erythrose 4-phosphate and phosphoenolpyruvate: step 2/7. In terms of biological role, catalyzes the conversion of 3-deoxy-D-arabino-heptulosonate 7-phosphate (DAHP) to dehydroquinate (DHQ). This Cronobacter sakazakii (strain ATCC BAA-894) (Enterobacter sakazakii) protein is 3-dehydroquinate synthase.